Consider the following 301-residue polypeptide: Acetyl-coenzyme A carboxylase carboxyl transferase subunit beta (301 aa).

Residues 25–294 (LWIKCPETGE…SAANDMNSGA (270 aa)) enclose the CoA carboxyltransferase N-terminal domain.

It belongs to the AccD/PCCB family. Acetyl-CoA carboxylase is a heterohexamer composed of biotin carboxyl carrier protein (AccB), biotin carboxylase (AccC) and two subunits each of ACCase subunit alpha (AccA) and ACCase subunit beta (AccD).

It localises to the cytoplasm. It carries out the reaction N(6)-carboxybiotinyl-L-lysyl-[protein] + acetyl-CoA = N(6)-biotinyl-L-lysyl-[protein] + malonyl-CoA. Its pathway is lipid metabolism; malonyl-CoA biosynthesis; malonyl-CoA from acetyl-CoA: step 1/1. Its function is as follows. Component of the acetyl coenzyme A carboxylase (ACC) complex. Biotin carboxylase (BC) catalyzes the carboxylation of biotin on its carrier protein (BCCP) and then the CO(2) group is transferred by the transcarboxylase to acetyl-CoA to form malonyl-CoA. The polypeptide is Acetyl-coenzyme A carboxylase carboxyl transferase subunit beta (Rhizobium leguminosarum bv. trifolii (strain WSM1325)).